Reading from the N-terminus, the 290-residue chain is 4-hydroxy-tetrahydrodipicolinate synthase (290 aa).

S44 is a pyruvate binding site. The Proton donor/acceptor role is filled by Y132. K161 functions as the Schiff-base intermediate with substrate in the catalytic mechanism. V202 contacts pyruvate.

This sequence belongs to the DapA family. Homotetramer; dimer of dimers.

Its subcellular location is the cytoplasm. The enzyme catalyses L-aspartate 4-semialdehyde + pyruvate = (2S,4S)-4-hydroxy-2,3,4,5-tetrahydrodipicolinate + H2O + H(+). Its pathway is amino-acid biosynthesis; L-lysine biosynthesis via DAP pathway; (S)-tetrahydrodipicolinate from L-aspartate: step 3/4. Its function is as follows. Catalyzes the condensation of (S)-aspartate-beta-semialdehyde [(S)-ASA] and pyruvate to 4-hydroxy-tetrahydrodipicolinate (HTPA). This Hydrogenobaculum sp. (strain Y04AAS1) protein is 4-hydroxy-tetrahydrodipicolinate synthase.